Consider the following 304-residue polypeptide: Protease HtpX homolog (304 aa).

Transmembrane regions (helical) follow at residues 14–34 (VFIILGFFIFVLMVGAAIGII) and 39–59 (YLNGLILAAVIGAFYILIMVM). H144 lines the Zn(2+) pocket. Residue E145 is part of the active site. Residue H148 participates in Zn(2+) binding. A run of 2 helical transmembrane segments spans residues 159-179 (IAIALVAVIAILSDIAMRMIF) and 202-222 (AIIYIVALIFVILAPIIATAI). Position 231 (E231) interacts with Zn(2+).

The protein belongs to the peptidase M48B family. Zn(2+) serves as cofactor.

It localises to the cell membrane. The polypeptide is Protease HtpX homolog (Listeria monocytogenes serotype 4a (strain HCC23)).